Reading from the N-terminus, the 494-residue chain is MFEIKKICCIGAGYVGGPTCSVIAQMCPKIQVTVVDVNEARINAWNSDTLPIYEPGLKEVVESCRGRNLFFSTSIDDAIREADLVFISVNTPTKTYGMGKGRAADLKYIEACARRIVQNSNGYKIVTEKSTVPVRAAESIRRIFDANTKPNLDLQVLSNPEFLAEGTAIKDLKNPDRVLIGGDDSPEGQKAVRALCAVYEHWVPKEKILTTNTWSSELSKLAANAFLAQRISSINSISALCEATGADVEEVARAIGTDQRIGNKFLKASVGFGGSCFQKDVLNLVYLCEALNLPEVARYWQQVIDMNDYQRRRFASRIIDSLFNTVTDKKIAILGFAFKKDTGDTRESSSIYISKYLMDEGAKLHIYDPKVPKEQIILDLSHPGVSEDNQVSRLVTISQDPYEACDGAHALVICTEWDMFKELDYERIHKKMLKPAFIFDGRRVLDDLHNELQVIGFQIETIGKKVSAKRIPFASSCEIPKFSLQDPPVKKPRV.

Residues 11–16, Asp36, Arg41, 89–93, and 130–132 contribute to the NAD(+) site; these read GAGYVG, VNTPT, and STV. The interval 88–110 is disordered; that stretch reads SVNTPTKTYGMGKGRAADLKYIE. Positions 129-135 are allosteric switch region; the sequence is KSTVPVR. Residue Glu161 is the Proton donor/acceptor of the active site. Residues 161 to 165, 220 to 224, Arg260, and 267 to 273 each bind substrate; these read EFLAE, KLAAN, and KASVGFG. Glu165 is an NAD(+) binding site. The Proton donor/acceptor role is filled by Lys220. The active-site Nucleophile is the Cys276. Residue 276–279 participates in NAD(+) binding; that stretch reads CFQK. The interval 321-325 is important for formation of active hexamer structure; sequence SLFNT. 338–339 is a substrate binding site; the sequence is FK. Residue Arg346 participates in NAD(+) binding. Arg442 is a binding site for substrate. The interval 466 to 494 is disordered; sequence VSAKRIPFASSCEIPKFSLQDPPVKKPRV.

Belongs to the UDP-glucose/GDP-mannose dehydrogenase family. As to quaternary structure, homohexamer.

It carries out the reaction UDP-alpha-D-glucose + 2 NAD(+) + H2O = UDP-alpha-D-glucuronate + 2 NADH + 3 H(+). The protein operates within nucleotide-sugar biosynthesis; UDP-alpha-D-glucuronate biosynthesis; UDP-alpha-D-glucuronate from UDP-alpha-D-glucose: step 1/1. UDP-alpha-D-xylose (UDX) acts as a feedback inhibitor. It binds at the same site as the substrate, but functions as allosteric inhibitor by triggering a conformation change that disrupts the active hexameric ring structure and gives rise to an inactive, horseshoe-shaped hexamer. Its function is as follows. Catalyzes the formation of UDP-alpha-D-glucuronate, a constituent of complex glycosaminoglycans. Required for the biosynthesis of chondroitin sulfate and heparan sulfate. Required for embryonic development via its role in the biosynthesis of glycosaminoglycans. In Gallus gallus (Chicken), this protein is UDP-glucose 6-dehydrogenase (UGDH).